Reading from the N-terminus, the 470-residue chain is Probable citrate synthase, mitochondrial (470 aa).

Active-site residues include His297, His351, and Asp406.

The protein belongs to the citrate synthase family. In terms of assembly, homodimer.

The protein resides in the mitochondrion matrix. The catalysed reaction is oxaloacetate + acetyl-CoA + H2O = citrate + CoA + H(+). Its pathway is carbohydrate metabolism; tricarboxylic acid cycle; isocitrate from oxaloacetate: step 1/2. This is Probable citrate synthase, mitochondrial from Leishmania infantum.